A 126-amino-acid polypeptide reads, in one-letter code: C-type natriuretic peptide (126 aa).

The first 23 residues, 1–23, serve as a signal peptide directing secretion; that stretch reads MHLSQLLACALLLTLLSLRPSEA. The interval 20 to 71 is disordered; sequence PSEAKPGAPPKVPRTPPAEELAEPQAAGGGQKKGDKAPGGGGANLKGDRSRL. Positions 24-73 are excised as a propeptide; the sequence is KPGAPPKVPRTPPAEELAEPQAAGGGQKKGDKAPGGGGANLKGDRSRLLR. A compositionally biased stretch (pro residues) spans 26–35; it reads GAPPKVPRTP. Residues 46–63 are compositionally biased toward gly residues; sequence AGGGQKKGDKAPGGGGAN. A disulfide bridge links cysteine 110 with cysteine 126.

This sequence belongs to the natriuretic peptide family. Post-translationally, degraded by IDE (in vitro). In terms of tissue distribution, in the kidney, predominantly expressed in the distal tubular cells (at protein level).

The protein resides in the secreted. Its function is as follows. Hormone which plays a role in endochondral ossification through regulation of cartilaginous growth plate chondrocytes proliferation and differentiation. May also be vasoactive and natriuretic. Acts by specifically binding and stimulating NPR2 to produce cGMP. Binds the clearance receptor NPR3. The protein is C-type natriuretic peptide (NPPC) of Homo sapiens (Human).